We begin with the raw amino-acid sequence, 208 residues long: Uracil phosphoribosyltransferase (208 aa).

Residues Arg-78, Arg-103, and 130–138 (DPMLATGGS) contribute to the 5-phospho-alpha-D-ribose 1-diphosphate site. Uracil-binding positions include Ile-193 and 198-200 (GDA). Position 199 (Asp-199) interacts with 5-phospho-alpha-D-ribose 1-diphosphate.

The protein belongs to the UPRTase family. Requires Mg(2+) as cofactor.

The enzyme catalyses UMP + diphosphate = 5-phospho-alpha-D-ribose 1-diphosphate + uracil. The protein operates within pyrimidine metabolism; UMP biosynthesis via salvage pathway; UMP from uracil: step 1/1. With respect to regulation, allosterically activated by GTP. Functionally, catalyzes the conversion of uracil and 5-phospho-alpha-D-ribose 1-diphosphate (PRPP) to UMP and diphosphate. The protein is Uracil phosphoribosyltransferase of Proteus mirabilis (strain HI4320).